The following is a 255-amino-acid chain: Thiazole synthase (255 aa).

Lys-96 serves as the catalytic Schiff-base intermediate with DXP. 1-deoxy-D-xylulose 5-phosphate contacts are provided by residues Gly-157, 183–184, and 205–206; these read AG and NT.

It belongs to the ThiG family. Homotetramer. Forms heterodimers with either ThiH or ThiS.

It localises to the cytoplasm. The enzyme catalyses [ThiS sulfur-carrier protein]-C-terminal-Gly-aminoethanethioate + 2-iminoacetate + 1-deoxy-D-xylulose 5-phosphate = [ThiS sulfur-carrier protein]-C-terminal Gly-Gly + 2-[(2R,5Z)-2-carboxy-4-methylthiazol-5(2H)-ylidene]ethyl phosphate + 2 H2O + H(+). The protein operates within cofactor biosynthesis; thiamine diphosphate biosynthesis. Functionally, catalyzes the rearrangement of 1-deoxy-D-xylulose 5-phosphate (DXP) to produce the thiazole phosphate moiety of thiamine. Sulfur is provided by the thiocarboxylate moiety of the carrier protein ThiS. In vitro, sulfur can be provided by H(2)S. This Staphylococcus haemolyticus (strain JCSC1435) protein is Thiazole synthase.